The sequence spans 307 residues: MGSTMEPPGGAYLHLGAVTSPVGTARMLQLAFGCTTFSLVAHRGGFGGVQGTFCMAAWGFCFAFSVLVVACEFTKLHSCLRLSWGNFTAAFAMLATLLCATAAVIYPLYFTRLECPPEPAGCMVRNFRLAASVFAGLLFLAYAAEVALTRARPGQVASYMATVSGLLKIVQAFVACIIFGALVHESRYGRYVATQWCVAVYSLCFMATVAVVVLSVMGHTAGLGCPFDRLVIVYTFLAVLLYLSAAVIWPVFCFDPKYGEPGRPADCLRGSCPWDSQLVVAIFTYVNLLLYIVDLAYSQRIRFVPTL.

MARVEL domains lie at 17 to 154 and 159 to 303; these read AVTS…ARPG and YMAT…RIRF. The next 7 helical transmembrane spans lie at 53–73, 90–110, 129–149, 163–183, 198–218, 232–252, and 278–298; these read FCMA…ACEF, AFAM…PLYF, LAAS…VALT, VSGL…GALV, VAVY…SVMG, IVYT…WPVF, and LVVA…LAYS.

Belongs to the MAL family.

It localises to the membrane. The protein is Myeloid-associated differentiation marker-like protein 2 (Myadml2) of Mus musculus (Mouse).